Reading from the N-terminus, the 1277-residue chain is NPC intracellular cholesterol transporter 1 (1277 aa).

The signal sequence occupies residues 1 to 22 (MSARGPAFGLLLLLLCPVQVFS). Residues 23–269 (QSCVWYGECG…WRILGLDAMY (247 aa)) lie on the Lumenal side of the membrane. 9 cysteine pairs are disulfide-bonded: C25–C74, C31–C42, C63–C109, C75–C113, C97–C238, C100–C160, C177–C184, C227–C243, and C240–C247. Residue N41 coordinates cholesterol. N-linked (GlcNAc...) asparagine glycosylation occurs at N70. Position 79 (Q79) interacts with cholesterol. N122 and N135 each carry an N-linked (GlcNAc...) asparagine glycan. The important for cholesterol binding and cholesterol transfer from NPC1 to liposomes stretch occupies residues 175–205 (LLCGREAQACNATNWIEYMFNKDNGQAPFTI). Residues N185 and N222 are each glycosylated (N-linked (GlcNAc...) asparagine). A helical membrane pass occupies residues 270–290 (VIMWSSYMAFLIVFFGAFFAV). The Cytoplasmic portion of the chain corresponds to 291-350 (WCYRKRYFVSEYTPIDGNIAFSVNSSDKGQAFCCDPLGAAFERGLRRLFAQWGAFCVRHP). Residues 351–371 (GCVVFFSLAFIVACSSGLVFI) traverse the membrane as a helical segment. Over 372 to 621 (RVTTDPVDLW…ELNRESNSDL (250 aa)) the chain is Lumenal. N-linked (GlcNAc...) asparagine glycans are attached at residues N415, N452, N459, and N478. Intrachain disulfides connect C468/C479 and C516/C533. In terms of domain architecture, SSD spans 620-785 (DLFTILISYA…ITCFVSLLGL (166 aa)). Residues 622–642 (FTILISYAIMFLYISIALGHI) form a helical membrane-spanning segment. The Cytoplasmic segment spans residues 643-653 (KSCSRLLVDSK). The chain crosses the membrane as a helical span at residues 654–674 (ISLGIAGILIVLSSVACSLGI). Over 675-677 (FSY) the chain is Lumenal. Residues 678-698 (IGVPLTLIVIEVIPFLVLAVG) form a helical membrane-spanning segment. The Cytoplasmic segment spans residues 699-734 (VDNIFILVQTYQRDERLQGETLDQQLGRVLGEVAPS). The helical transmembrane segment at 735–755 (MFLSSFSETVAFFLGGLSVVP) threads the bilayer. Topologically, residues 756-759 (AVHT) are lumenal. A helical transmembrane segment spans residues 760-780 (FSLFAGMAVLIDFLLQITCFV). Topologically, residues 781-832 (SLLGLDIKRQEKNRLDVVCCVQGAEDGAGVQASESCLFRFFKNSYAPLLLKD) are cytoplasmic. Residues 833–853 (WMRPIVIAVFVGVLSFSIAVL) form a helical membrane-spanning segment. At 854 to 1097 (NKVEIGLDQS…EQYLTVIDDT (244 aa)) the chain is on the lumenal side. Residue N898 is glycosylated (N-linked (GlcNAc...) asparagine). C909 and C914 are oxidised to a cystine. Residues N916, N931, N961, N968, N1028, and N1063 are each glycosylated (N-linked (GlcNAc...) asparagine). Disulfide bonds link C956/C1011, C957/C979, and C967/C976. The chain crosses the membrane as a helical span at residues 1098–1118 (IFNLGVSLGAIFLVTVVLMGC). At 1119 to 1123 (ELWAT) the chain is on the cytoplasmic side. The chain crosses the membrane as a helical span at residues 1124–1144 (VIMCVTIAMILVNMFGVMWLW). Position 1145 (G1145) is a topological domain, lumenal. The helical transmembrane segment at 1146–1166 (ISLNAVSLVNLVMSCGISVEF) threads the bilayer. Residues 1167-1194 (CSHITRAFTLSTKGSRVDRAEEALAHMG) lie on the Cytoplasmic side of the membrane. Residues 1195 to 1215 (SSVFSGITLTKFGGIVVLAFA) form a helical membrane-spanning segment. Residues 1216–1226 (KSQIFQIFYFR) are Lumenal-facing. A helical membrane pass occupies residues 1227–1247 (MYLAIVLLGATHGLIFLPVLL). Over 1248 to 1277 (SYIGPSINKAKSLATQERYKGTEREQLLNF) the chain is Cytoplasmic. The required for location in lysosomes stretch occupies residues 1274 to 1277 (LLNF). The short motif at 1274–1277 (LLNF) is the Di-leucine motif element.

This sequence belongs to the patched family. In terms of assembly, interacts (via the second lumenal domain) with NPC2. Interacts with TMEM97; the interaction may decrease NPC1 availability to the cell. Interacts with TIM1. Interacts with SLC38A9; this interaction inhibits cholesterol-mediated mTORC1 activation via its sterol transport activity. Post-translationally, N-glycosylated. Detected in corpus luteum, granulosa cells and adrenal gland.

It is found in the late endosome membrane. The protein localises to the lysosome membrane. It catalyses the reaction cholesterol(in) = cholesterol(out). In terms of biological role, intracellular cholesterol transporter which acts in concert with NPC2 and plays an important role in the egress of cholesterol from the endosomal/lysosomal compartment. Unesterified cholesterol that has been released from LDLs in the lumen of the late endosomes/lysosomes is transferred by NPC2 to the cholesterol-binding pocket in the N-terminal domain of NPC1. Cholesterol binds to NPC1 with the hydroxyl group buried in the binding pocket. Binds oxysterol with higher affinity than cholesterol. May play a role in vesicular trafficking in glia, a process that may be crucial for maintaining the structural and functional integrity of nerve terminals. Inhibits cholesterol-mediated mTORC1 activation throught its interaction with SLC38A9. The polypeptide is NPC intracellular cholesterol transporter 1 (Sus scrofa (Pig)).